Reading from the N-terminus, the 457-residue chain is 11S globulin seed storage protein Ana o 2.0101 (457 aa).

The first 14 residues, 1–14 (LSVCFLILFHGCLA), serve as a signal peptide directing secretion. The igE-binding stretch occupies residues 15–29 (SRQEWQQQDECQIDR). 2 disulfide bridges follow: cysteine 25/cysteine 58 and cysteine 101/cysteine 278. 2 conformational epitope; mouse monoclonal antibody (mAb) 2B5-binding regions span residues 29–37 (RLDALEPDN) and 31–48 (DALE…TVEA). In terms of domain architecture, Cupin type-1 1 spans 30-220 (LDALEPDNRV…AFQVDERLIK (191 aa)). 2 binds goat polyclonal antibodies (pAbs) regions span residues 32–45 (ALEP…EAGT) and 55–86 (QFRC…QLIY). The segment at 34 to 57 (EPDNRVEYEAGTVEAWDPNHEQFR) is mouse monoclonal antibody (mAb) 2B5-binding. The segment at 41-55 (YEAGTVEAWDPNHEQ) is mouse monoclonal antibody (mAb) 4H9-binding. The interval 105–119 (YQAPQQGRQQGQSGR) is igE-binding. Positions 215–239 (DERLIKQLKSEDNRGGIVKVKDDEL) are binds goat polyclonal antibodies (pAbs). Residues 233 to 252 (KVKDDELRVIRPSRSQSERG) form a CD4(+) T cell-reactive epitope region. The tract at residues 243–270 (RPSRSQSERGSESEEESEDEKRRWGQRD) is disordered. The segment covering 261 to 270 (DEKRRWGQRD) has biased composition (basic and acidic residues). Residues 265-289 (RWGQRDNGIEETICTMRLKENINDP) are linear epitope; mouse monoclonal antibody (mAb) 1F5-binding. An NGXEET; peptidase recognition motif motif is present at residues 271–276 (NGIEET). Positions 284–433 (ENINDPARAD…AFQISREDAR (150 aa)) constitute a Cupin type-1 2 domain. CD4(+) T cell-reactive epitope regions lie at residues 289-308 (PARA…LNSL), 297-316 (PEVG…LKWL), 321-340 (EKGV…LNSH), 329-348 (ALVL…GCKG), and 377-396 (QNFA…ISFK). The segment at 395-416 (FKTNDRAMTSPLAGRTSVLGGM) is binds goat polyclonal antibodies (pAbs), but buried in the 3D-structure model.

This sequence belongs to the 11S seed storage protein (globulins) family. In terms of assembly, homotrimer. Hexamer. Each subunit is composed of an acidic and a basic chain derived from a single precursor and linked by a disulfide bond. Post-translationally, proteolytically processed from a single precursor to produce an acidic and a basic chain that are linked by a disulfide bond. Not glycosylated. As to expression, expressed in seed (at protein level). Expressed in the juice of the cashew apple (at protein level).

In terms of biological role, seed storage protein. The chain is 11S globulin seed storage protein Ana o 2.0101 from Anacardium occidentale (Cashew).